A 469-amino-acid polypeptide reads, in one-letter code: 6-phosphofructo-2-kinase/fructose-2,6-bisphosphatase 4 (469 aa).

Positions 1-249 are 6-phosphofructo-2-kinase; sequence MASPRELTQN…YYLMNIHVTP (249 aa). 46 to 54 contacts ATP; it reads GLPARGKTY. The beta-D-fructose 6-phosphate site is built by R79 and R103. D129 is a catalytic residue. 2 residues coordinate beta-D-fructose 6-phosphate: T131 and R137. C159 is a catalytic residue. 168-173 contributes to the ATP binding site; that stretch reads NIVQVK. Beta-D-fructose 6-phosphate contacts are provided by K173, R194, and Y198. The interval 250–469 is fructose-2,6-bisphosphatase; the sequence is RSIYLCRHGE…EALVTVPAHQ (220 aa). R256 serves as a coordination point for beta-D-fructose 2,6-bisphosphate. Residue H257 is the Tele-phosphohistidine intermediate of the active site. Beta-D-fructose 2,6-bisphosphate contacts are provided by N263, G269, and R306. The Proton donor/acceptor role is filled by E326. Y337, R351, K355, Y366, Q392, and R396 together coordinate beta-D-fructose 2,6-bisphosphate. Residue 348–351 coordinates ATP; that stretch reads FALR. Residues 392-396 and Y428 each bind ATP; that span reads QAVMR. Residue T444 is modified to Phosphothreonine; by PKC.

This sequence in the C-terminal section; belongs to the phosphoglycerate mutase family. As to quaternary structure, homodimer.

It carries out the reaction beta-D-fructose 2,6-bisphosphate + H2O = beta-D-fructose 6-phosphate + phosphate. The enzyme catalyses beta-D-fructose 6-phosphate + ATP = beta-D-fructose 2,6-bisphosphate + ADP + H(+). The most important regulatory mechanism of these opposing activities is by phosphorylation and dephosphorylation of the enzyme. Functionally, synthesis and degradation of fructose 2,6-bisphosphate. In Homo sapiens (Human), this protein is 6-phosphofructo-2-kinase/fructose-2,6-bisphosphatase 4 (PFKFB4).